Consider the following 759-residue polypeptide: Phosphoribosylformylglycinamidine synthase subunit PurL (759 aa).

Residue histidine 48 is part of the active site. 2 residues coordinate ATP: tyrosine 51 and lysine 91. Glutamate 93 provides a ligand contact to Mg(2+). Substrate is bound by residues 94–97 and arginine 116; that span reads SHNH. The Proton acceptor role is filled by histidine 95. Position 117 (aspartate 117) interacts with Mg(2+). Position 240 (glutamine 240) interacts with substrate. Aspartate 268 serves as a coordination point for Mg(2+). Residue 317–319 participates in substrate binding; the sequence is ESQ. ATP is bound by residues asparagine 501 and glycine 538. Asparagine 539 serves as a coordination point for Mg(2+). Serine 541 provides a ligand contact to substrate.

It belongs to the FGAMS family. In terms of assembly, monomer. Part of the FGAM synthase complex composed of 1 PurL, 1 PurQ and 2 PurS subunits.

It is found in the cytoplasm. The enzyme catalyses N(2)-formyl-N(1)-(5-phospho-beta-D-ribosyl)glycinamide + L-glutamine + ATP + H2O = 2-formamido-N(1)-(5-O-phospho-beta-D-ribosyl)acetamidine + L-glutamate + ADP + phosphate + H(+). It participates in purine metabolism; IMP biosynthesis via de novo pathway; 5-amino-1-(5-phospho-D-ribosyl)imidazole from N(2)-formyl-N(1)-(5-phospho-D-ribosyl)glycinamide: step 1/2. In terms of biological role, part of the phosphoribosylformylglycinamidine synthase complex involved in the purines biosynthetic pathway. Catalyzes the ATP-dependent conversion of formylglycinamide ribonucleotide (FGAR) and glutamine to yield formylglycinamidine ribonucleotide (FGAM) and glutamate. The FGAM synthase complex is composed of three subunits. PurQ produces an ammonia molecule by converting glutamine to glutamate. PurL transfers the ammonia molecule to FGAR to form FGAM in an ATP-dependent manner. PurS interacts with PurQ and PurL and is thought to assist in the transfer of the ammonia molecule from PurQ to PurL. The polypeptide is Phosphoribosylformylglycinamidine synthase subunit PurL (Chlorobaculum tepidum (strain ATCC 49652 / DSM 12025 / NBRC 103806 / TLS) (Chlorobium tepidum)).